The following is a 518-amino-acid chain: Suppressor of hairless homolog (518 aa).

The interval 22–59 (ETDQQRSHVKERVNGTPNQNGGTSTSSKPRSVFENRPP) is disordered. A compositionally biased stretch (basic and acidic residues) spans 24-34 (DQQRSHVKERV). The segment covering 36–50 (GTPNQNGGTSTSSKP) has biased composition (polar residues). 3 consecutive DNA-binding regions follow at residues 89–96 (KSYGNEKR), 223–232 (RLRSQTVSTR), and 296–328 (RKVD…ERMY). Positions 386–476 (PVVHSLQLNG…YPTNLTFTFT (91 aa)) constitute an IPT/TIG domain.

It belongs to the Su(H) family. As to quaternary structure, interacts with activated Notch proteins.

It localises to the nucleus. Transcriptional regulator that plays a central role in Notch signaling, a signaling pathway involved in cell-cell communication that regulates a broad spectrum of cell-fate determinations. Acts as a transcriptional repressor when it is not associated with Notch proteins. When associated with some Notch protein, it acts as a transcriptional activator that activates transcription of Notch target genes. The polypeptide is Suppressor of hairless homolog (RBP-JK) (Halocynthia roretzi (Sea squirt)).